Reading from the N-terminus, the 962-residue chain is Nonsense-mediated mRNA decay factor SMG8 (962 aa).

The interval 634-661 (RSPEISSQIASSGLSSRSNSTSSGTSSA) is disordered. Over residues 639–661 (SSQIASSGLSSRSNSTSSGTSSA) the composition is skewed to low complexity.

Belongs to the SMG8 family.

Functionally, involved in nonsense-mediated decay (NMD) of mRNAs containing premature stop codons. Probable component of kinase complex containing nonC and recruited to stalled ribosomes. The protein is Nonsense-mediated mRNA decay factor SMG8 of Drosophila virilis (Fruit fly).